The chain runs to 1744 residues: Retrotransposon-like protein 1 (1744 aa).

Disordered stretches follow at residues 1–416, 823–859, and 1287–1439; these read MIEP…SPEE, READ…DQSG, and SSET…EVPS. A compositionally biased stretch (low complexity) spans 19–30; the sequence is SSKQMESSEGSS. Polar residues predominate over residues 31-40; it reads NTVEETPGSS. The span at 41–80 shows a compositional bias: low complexity; it reads GAQAGAQAGAQAEAQAETQVEAQAEAQAEAQVEAQVEAQA. The span at 269 to 318 shows a compositional bias: polar residues; that stretch reads DGSNQESSDGSNHELSNGSNHESSFGSNPESSDVSNLESSGGSNQESSDG. Low complexity predominate over residues 332–361; that stretch reads SDNSNQELSDNSNQESSDSSNQSSDISNQE. 3 stretches are compositionally biased toward acidic residues: residues 385 to 407, 837 to 846, and 1291 to 1437; these read SDQD…GEEE, GSDDLSESEP, and EDKE…DEEV. 2 helical membrane passes run 1473–1493 and 1520–1540; these read FFRG…LVML and LILD…AQLL.

Expressed in placenta and in various tissues in late-fetal stage.

Its subcellular location is the membrane. Plays an essential role in capillaries endothelial cells for the maintenance of feto-maternal interface and for development of the placenta. The chain is Retrotransposon-like protein 1 (Rtl1) from Mus musculus (Mouse).